A 345-amino-acid chain; its full sequence is Holliday junction branch migration complex subunit RuvB (345 aa).

Positions Met1–Tyr183 are large ATPase domain (RuvB-L). ATP contacts are provided by residues Ile22, Arg23, Gly64, Lys67, Thr68, Thr69, Glu130–Tyr132, Arg173, Tyr183, and Arg220. Thr68 contributes to the Mg(2+) binding site. Residues Ser184–Asp254 form a small ATPAse domain (RuvB-S) region. Residues Pro257 to Glu345 form a head domain (RuvB-H) region. DNA-binding residues include Arg293, Arg312, and Arg317.

Belongs to the RuvB family. As to quaternary structure, homohexamer. Forms an RuvA(8)-RuvB(12)-Holliday junction (HJ) complex. HJ DNA is sandwiched between 2 RuvA tetramers; dsDNA enters through RuvA and exits via RuvB. An RuvB hexamer assembles on each DNA strand where it exits the tetramer. Each RuvB hexamer is contacted by two RuvA subunits (via domain III) on 2 adjacent RuvB subunits; this complex drives branch migration. In the full resolvosome a probable DNA-RuvA(4)-RuvB(12)-RuvC(2) complex forms which resolves the HJ.

The protein localises to the cytoplasm. It catalyses the reaction ATP + H2O = ADP + phosphate + H(+). Functionally, the RuvA-RuvB-RuvC complex processes Holliday junction (HJ) DNA during genetic recombination and DNA repair, while the RuvA-RuvB complex plays an important role in the rescue of blocked DNA replication forks via replication fork reversal (RFR). RuvA specifically binds to HJ cruciform DNA, conferring on it an open structure. The RuvB hexamer acts as an ATP-dependent pump, pulling dsDNA into and through the RuvAB complex. RuvB forms 2 homohexamers on either side of HJ DNA bound by 1 or 2 RuvA tetramers; 4 subunits per hexamer contact DNA at a time. Coordinated motions by a converter formed by DNA-disengaged RuvB subunits stimulates ATP hydrolysis and nucleotide exchange. Immobilization of the converter enables RuvB to convert the ATP-contained energy into a lever motion, pulling 2 nucleotides of DNA out of the RuvA tetramer per ATP hydrolyzed, thus driving DNA branch migration. The RuvB motors rotate together with the DNA substrate, which together with the progressing nucleotide cycle form the mechanistic basis for DNA recombination by continuous HJ branch migration. Branch migration allows RuvC to scan DNA until it finds its consensus sequence, where it cleaves and resolves cruciform DNA. The sequence is that of Holliday junction branch migration complex subunit RuvB from Methylococcus capsulatus (strain ATCC 33009 / NCIMB 11132 / Bath).